Reading from the N-terminus, the 285-residue chain is Golgi phosphoprotein 3-like (285 aa).

A disordered region spans residues 1–39 (MTTLTHRARRTEVGKNSEKKVESEENVNQDRNQDNEDIG). Over residues 10–23 (RTEVGKNSEKKVES) the composition is skewed to basic and acidic residues. Residues Trp67 and Arg76 each contribute to the a 1,2-diacyl-sn-glycero-3-phospho-(1D-myo-inositol 4-phosphate) site. The residue at position 112 (Ser112) is a Phosphoserine. 2 residues coordinate a 1,2-diacyl-sn-glycero-3-phospho-(1D-myo-inositol 4-phosphate): Arg157 and Arg160. The beta-hairpin required for oligomerization stretch occupies residues 176-187 (EKQNFLLFDMTT).

This sequence belongs to the GOLPH3/VPS74 family. In terms of assembly, homooligomer. Does not interact MYO18; differs from GOLPH3 by its inability to interact with MYO18. May interact with ARF1.

Its subcellular location is the golgi apparatus. It localises to the golgi stack membrane. The protein resides in the trans-Golgi network membrane. In terms of biological role, phosphatidylinositol-4-phosphate-binding protein that may antagonize the action of GOLPH3 which is required for the process of vesicle budding at the Golgi and anterograde transport to the plasma membrane. The protein is Golgi phosphoprotein 3-like (GOLPH3L) of Bos taurus (Bovine).